The chain runs to 357 residues: Holliday junction branch migration complex subunit RuvB (357 aa).

Over residues 1 to 10 (MAIQSDSLSS) the composition is skewed to polar residues. Residues 1 to 30 (MAIQSDSLSSRPDAPRLVAPAPASPNEESI) form a disordered region. The large ATPase domain (RuvB-L) stretch occupies residues 5–195 (SDSLSSRPDA…FGIVSRLEFY (191 aa)). ATP-binding positions include L34, R35, G76, K79, T80, T81, 142–144 (EDF), R185, Y195, and R232. T80 contributes to the Mg(2+) binding site. Residues 196–266 (NTDDLAHIVT…AANQALAMLE (71 aa)) form a small ATPAse domain (RuvB-S) region. A head domain (RuvB-H) region spans residues 269 to 357 (PQGLDLMDRK…QPSSGDLFGA (89 aa)). Positions 305, 324, and 329 each coordinate DNA.

It belongs to the RuvB family. Homohexamer. Forms an RuvA(8)-RuvB(12)-Holliday junction (HJ) complex. HJ DNA is sandwiched between 2 RuvA tetramers; dsDNA enters through RuvA and exits via RuvB. An RuvB hexamer assembles on each DNA strand where it exits the tetramer. Each RuvB hexamer is contacted by two RuvA subunits (via domain III) on 2 adjacent RuvB subunits; this complex drives branch migration. In the full resolvosome a probable DNA-RuvA(4)-RuvB(12)-RuvC(2) complex forms which resolves the HJ.

The protein resides in the cytoplasm. It catalyses the reaction ATP + H2O = ADP + phosphate + H(+). Its function is as follows. The RuvA-RuvB-RuvC complex processes Holliday junction (HJ) DNA during genetic recombination and DNA repair, while the RuvA-RuvB complex plays an important role in the rescue of blocked DNA replication forks via replication fork reversal (RFR). RuvA specifically binds to HJ cruciform DNA, conferring on it an open structure. The RuvB hexamer acts as an ATP-dependent pump, pulling dsDNA into and through the RuvAB complex. RuvB forms 2 homohexamers on either side of HJ DNA bound by 1 or 2 RuvA tetramers; 4 subunits per hexamer contact DNA at a time. Coordinated motions by a converter formed by DNA-disengaged RuvB subunits stimulates ATP hydrolysis and nucleotide exchange. Immobilization of the converter enables RuvB to convert the ATP-contained energy into a lever motion, pulling 2 nucleotides of DNA out of the RuvA tetramer per ATP hydrolyzed, thus driving DNA branch migration. The RuvB motors rotate together with the DNA substrate, which together with the progressing nucleotide cycle form the mechanistic basis for DNA recombination by continuous HJ branch migration. Branch migration allows RuvC to scan DNA until it finds its consensus sequence, where it cleaves and resolves cruciform DNA. The polypeptide is Holliday junction branch migration complex subunit RuvB (Bordetella avium (strain 197N)).